An 83-amino-acid chain; its full sequence is Sulfur carrier protein TusA (83 aa).

C19 acts as the Cysteine persulfide intermediate in catalysis.

It belongs to the sulfur carrier protein TusA family.

The protein resides in the cytoplasm. Functionally, sulfur carrier protein which probably makes part of a sulfur-relay system. The protein is Sulfur carrier protein TusA of Vibrio atlanticus (strain LGP32) (Vibrio splendidus (strain Mel32)).